Here is a 201-residue protein sequence, read N- to C-terminus: Proteasome subunit beta type-2 (201 aa).

Methionine 1 carries the N-acetylmethionine modification.

The protein belongs to the peptidase T1B family. In terms of assembly, the 26S proteasome consists of a 20S proteasome core and two 19S regulatory subunits. The 20S proteasome core is a barrel-shaped complex made of 28 subunits that are arranged in four stacked rings. The two outer rings are each formed by seven alpha subunits, and the two inner rings are formed by seven beta subunits. The proteolytic activity is exerted by three beta-subunits PSMB5, PSMB6 and PSMB7.

The protein localises to the cytoplasm. The protein resides in the nucleus. Non-catalytic component of the 20S core proteasome complex involved in the proteolytic degradation of most intracellular proteins. This complex plays numerous essential roles within the cell by associating with different regulatory particles. Associated with two 19S regulatory particles, forms the 26S proteasome and thus participates in the ATP-dependent degradation of ubiquitinated proteins. The 26S proteasome plays a key role in the maintenance of protein homeostasis by removing misfolded or damaged proteins that could impair cellular functions, and by removing proteins whose functions are no longer required. Associated with the PA200 or PA28, the 20S proteasome mediates ubiquitin-independent protein degradation. This type of proteolysis is required in several pathways including spermatogenesis (20S-PA200 complex) or generation of a subset of MHC class I-presented antigenic peptides (20S-PA28 complex). This chain is Proteasome subunit beta type-2 (PSMB2), found in Bos taurus (Bovine).